We begin with the raw amino-acid sequence, 648 residues long: Mitotic interactor and substrate of PLK1 (648 aa).

S77 carries the post-translational modification Phosphoserine; by CDK1. T149 and T190 each carry phosphothreonine. Residue S220 is modified to Phosphoserine. Disordered stretches follow at residues 242 to 383 and 430 to 460; these read VNDP…PEAR and KATE…GKAT. S253 carries the phosphoserine; by CDK1 modification. Basic and acidic residues predominate over residues 255 to 281; the sequence is ETPKETPIEREIRLAQEREAELREQRG. T256 is modified (phosphothreonine; by CDK1). Phosphoserine is present on S318. Residues 325 to 339 are compositionally biased toward basic and acidic residues; it reads MVQETQREEDHRREG. T347 is subject to Phosphothreonine; by CDK1. A compositionally biased stretch (polar residues) spans 349-367; sequence DWPSQDPQPGLQRSLSSDC. Phosphoserine is present on residues S352 and S364. 2 positions are modified to phosphoserine; by PLK1: S365 and S439. The segment covering 440–450 has biased composition (polar residues); it reads ESSGRSLSSKQ. Residues S507 and S509 each carry the phosphoserine modification. A coiled-coil region spans residues 511–534; the sequence is DLLEREMESVLRREREVAEERRNA. A disordered region spans residues 539–568; the sequence is VFSPVPAEDESHEQDSRSSSRASGITGSYS. Position 541 is a phosphoserine; by CDK1 (S541). A Phosphoserine; by PLK1 modification is found at S554. Residues 557 to 568 are compositionally biased toward polar residues; that stretch reads SSRASGITGSYS. Phosphoserine is present on S644.

Belongs to the MISP family. Associates with F-actin. Interacts with DCTN1; this interaction regulates DCTN1 distribution at the cell cortex. Interacts with PTK2/FAK and MAPRE1. Phosphorylated by CDK1 and PLK1. CDK1 is the priming kinase for PLK1 phosphorylation. Phosphorylation by PLK1 is required for proper spindle orientation at metaphase.

The protein resides in the cell junction. It localises to the focal adhesion. The protein localises to the cytoplasm. Its subcellular location is the cytoskeleton. It is found in the cell cortex. In terms of biological role, plays a role in mitotic spindle orientation and mitotic progression. Regulates the distribution of dynactin at the cell cortex in a PLK1-dependent manner, thus stabilizing cortical and astral microtubule attachments required for proper mitotic spindle positioning. May link microtubules to the actin cytoskeleton and focal adhesions. May be required for directed cell migration and centrosome orientation. May also be necessary for proper stacking of the Golgi apparatus. This is Mitotic interactor and substrate of PLK1 from Mus musculus (Mouse).